The chain runs to 142 residues: Malate dehydrogenase, mitochondrial (142 aa).

NAD(+)-binding positions include alanine 1–glycine 6 and aspartate 26. The substrate site is built by arginine 73 and arginine 79. NAD(+) contacts are provided by residues asparagine 86 and isoleucine 109–asparagine 111. Asparagine 111 is a substrate binding site.

This sequence belongs to the LDH/MDH superfamily. MDH type 1 family. In terms of assembly, homodimer.

It localises to the mitochondrion matrix. It carries out the reaction (S)-malate + NAD(+) = oxaloacetate + NADH + H(+). The protein is Malate dehydrogenase, mitochondrial of Schistosoma mansoni (Blood fluke).